A 325-amino-acid chain; its full sequence is MPLRIVFLGSPAFAVAPLERLVADARYQVVGVVTQPDRPAGRGRASVATPVKQAALRLGVPVLTPETLRDPAAVAELAALRPDVGVVAAYGEILRRDVLAIPPLGYVNIHPSLLPLYRGPSPVAGAILNGDAETGVTIMLIDAKMDSGPILAQRTVPLPPDARTGPLTQELFTIGADVLVETLDAYARGAITPQPQDHARATFTKLLTRDDGIIDWTQPAVRIERMTRAYDPWPGATTMWRGAPLKIIAARVIADRCADVPPGTLIDTADGPAVATGNGLLALITVQPAGKRPLPAADWRRGLRLSGGERLGDASARLSGGEAVH.

112 to 115 (SLLP) is a binding site for (6S)-5,6,7,8-tetrahydrofolate.

It belongs to the Fmt family.

The catalysed reaction is L-methionyl-tRNA(fMet) + (6R)-10-formyltetrahydrofolate = N-formyl-L-methionyl-tRNA(fMet) + (6S)-5,6,7,8-tetrahydrofolate + H(+). Functionally, attaches a formyl group to the free amino group of methionyl-tRNA(fMet). The formyl group appears to play a dual role in the initiator identity of N-formylmethionyl-tRNA by promoting its recognition by IF2 and preventing the misappropriation of this tRNA by the elongation apparatus. The polypeptide is Methionyl-tRNA formyltransferase (Roseiflexus sp. (strain RS-1)).